The following is an 865-amino-acid chain: Alanine--tRNA ligase (865 aa).

Positions 554, 558, 656, and 660 each coordinate Zn(2+).

It belongs to the class-II aminoacyl-tRNA synthetase family. Zn(2+) is required as a cofactor.

The protein resides in the cytoplasm. It catalyses the reaction tRNA(Ala) + L-alanine + ATP = L-alanyl-tRNA(Ala) + AMP + diphosphate. Its function is as follows. Catalyzes the attachment of alanine to tRNA(Ala) in a two-step reaction: alanine is first activated by ATP to form Ala-AMP and then transferred to the acceptor end of tRNA(Ala). Also edits incorrectly charged Ser-tRNA(Ala) and Gly-tRNA(Ala) via its editing domain. The protein is Alanine--tRNA ligase of Francisella tularensis subsp. tularensis (strain WY96-3418).